A 273-amino-acid chain; its full sequence is DNA repair protein RecO (273 aa).

The segment at Gly-249 to Arg-273 is disordered. A compositionally biased stretch (basic and acidic residues) spans Leu-252–Arg-273.

Belongs to the RecO family.

In terms of biological role, involved in DNA repair and RecF pathway recombination. The sequence is that of DNA repair protein RecO from Heliobacterium modesticaldum (strain ATCC 51547 / Ice1).